The sequence spans 294 residues: N-acetylmuramic acid 6-phosphate etherase (294 aa).

The region spanning 54–217 (VIQSFEEEGR…STASMIGVGK (164 aa)) is the SIS domain. The Proton donor role is filled by Glu82. The active site involves Glu113.

It belongs to the GCKR-like family. MurNAc-6-P etherase subfamily. As to quaternary structure, homodimer.

It catalyses the reaction N-acetyl-D-muramate 6-phosphate + H2O = N-acetyl-D-glucosamine 6-phosphate + (R)-lactate. It functions in the pathway amino-sugar metabolism; N-acetylmuramate degradation. Specifically catalyzes the cleavage of the D-lactyl ether substituent of MurNAc 6-phosphate, producing GlcNAc 6-phosphate and D-lactate. This is N-acetylmuramic acid 6-phosphate etherase from Bacillus anthracis (strain A0248).